We begin with the raw amino-acid sequence, 290 residues long: L-cysteine S-thiosulfotransferase subunit SoxA (290 aa).

The signal sequence occupies residues 1–26 (MPRFTKTKGTLAATALGLALAGAAFA). Residues D78 and D81 each coordinate Zn(2+). The region spanning 78 to 171 (DDFDNPAMVF…DMLSLISLQS (94 aa)) is the Cytochrome c domain. Heme c is bound by residues C106, C109, H110, and C143. Position 190 (H190) interacts with Zn(2+). Positions 206, 209, and 210 each coordinate heme c. R247 contributes to the substrate binding site. Position 251 (C251) interacts with heme c. C251 (cysteine persulfide intermediate) is an active-site residue. D266 serves as a coordination point for Zn(2+).

Belongs to the SoxA family. In terms of assembly, heterodimer of SoxA and SoxX. Heme c serves as cofactor. Zn(2+) is required as a cofactor. Cysteine persulfide at Cys-251.

It localises to the periplasm. It catalyses the reaction L-cysteinyl-[SoxY protein] + thiosulfate + 2 Fe(III)-[cytochrome c] = S-sulfosulfanyl-L-cysteinyl-[SoxY protein] + 2 Fe(II)-[cytochrome c] + 2 H(+). The enzyme catalyses S-sulfanyl-L-cysteinyl-[SoxY protein] + thiosulfate + 2 Fe(III)-[cytochrome c] = S-(2-sulfodisulfanyl)-L-cysteinyl-[SoxY protein] + 2 Fe(II)-[cytochrome c] + 2 H(+). In terms of biological role, C-type diheme cytochrome, which is part of the SoxAX cytochrome complex involved in sulfur oxidation. The SoxAX complex catalyzes the formation of a heterodisulfide bond between the conserved cysteine residue on a sulfur carrier SoxYZ complex subunit SoxY and thiosulfate or other inorganic sulfur substrates. This leads to the liberation of two electrons, which may be transferred from the SoxAX complex to another cytochrome c that then channels them into the respiratory electron transport chain. Some electrons may be used for reductive CO(2) fixation. The chain is L-cysteine S-thiosulfotransferase subunit SoxA from Paracoccus pantotrophus (Thiosphaera pantotropha).